A 190-amino-acid polypeptide reads, in one-letter code: Potassium-transporting ATPase KdpC subunit (190 aa).

A helical membrane pass occupies residues 10–30; sequence TFIFLLLITGGVYPLLTTVLG.

It belongs to the KdpC family. The system is composed of three essential subunits: KdpA, KdpB and KdpC.

Its subcellular location is the cell inner membrane. Part of the high-affinity ATP-driven potassium transport (or Kdp) system, which catalyzes the hydrolysis of ATP coupled with the electrogenic transport of potassium into the cytoplasm. This subunit acts as a catalytic chaperone that increases the ATP-binding affinity of the ATP-hydrolyzing subunit KdpB by the formation of a transient KdpB/KdpC/ATP ternary complex. In Shigella dysenteriae serotype 1 (strain Sd197), this protein is Potassium-transporting ATPase KdpC subunit.